We begin with the raw amino-acid sequence, 244 residues long: Small ribosomal subunit protein uS3 (244 aa).

One can recognise a KH type-2 domain in the interval 39 to 107 (MRKFVMSELK…ETHLNIVEVR (69 aa)). Positions 214-244 (ASERRALEGDAQGPASRERDRGDRRRERDNA) are disordered. Positions 229–244 (SRERDRGDRRRERDNA) are enriched in basic and acidic residues.

It belongs to the universal ribosomal protein uS3 family. Part of the 30S ribosomal subunit. Forms a tight complex with proteins S10 and S14.

In terms of biological role, binds the lower part of the 30S subunit head. Binds mRNA in the 70S ribosome, positioning it for translation. This Rhizobium etli (strain CIAT 652) protein is Small ribosomal subunit protein uS3.